We begin with the raw amino-acid sequence, 740 residues long: NAD(P)H-quinone oxidoreductase subunit 5, chloroplastic (740 aa).

The next 16 membrane-spanning stretches (helical) occupy residues 9 to 29 (WIIP…LFLF), 40 to 60 (WAFQ…YLSI), 89 to 109 (IDPL…MVLI), 125 to 145 (FAYM…SNLI), 147 to 167 (IYIF…FWFT), 185 to 205 (GDFG…SFEF), 219 to 239 (NEVD…GAVA), 258 to 278 (TPIS…FLVA), 286 to 306 (VIPY…LLGA), 327 to 347 (LGYM…FHLI), 354 to 374 (ALLF…VGYS), 396 to 416 (ITFL…CFWS), 425 to 445 (WLYS…TAFY), 543 to 563 (LFPI…GIPF), 602 to 622 (VLSV…YKPI), and 717 to 737 (SYLF…YLLF).

This sequence belongs to the complex I subunit 5 family. NDH is composed of at least 16 different subunits, 5 of which are encoded in the nucleus.

It is found in the plastid. It localises to the chloroplast thylakoid membrane. It catalyses the reaction a plastoquinone + NADH + (n+1) H(+)(in) = a plastoquinol + NAD(+) + n H(+)(out). It carries out the reaction a plastoquinone + NADPH + (n+1) H(+)(in) = a plastoquinol + NADP(+) + n H(+)(out). In terms of biological role, NDH shuttles electrons from NAD(P)H:plastoquinone, via FMN and iron-sulfur (Fe-S) centers, to quinones in the photosynthetic chain and possibly in a chloroplast respiratory chain. The immediate electron acceptor for the enzyme in this species is believed to be plastoquinone. Couples the redox reaction to proton translocation, and thus conserves the redox energy in a proton gradient. This is NAD(P)H-quinone oxidoreductase subunit 5, chloroplastic (ndhF) from Nicotiana sylvestris (Wood tobacco).